Here is a 967-residue protein sequence, read N- to C-terminus: Phosphoenolpyruvate carboxylase (967 aa).

Phosphoserine is present on serine 10. Residues histidine 171 and lysine 601 contribute to the active site. Residues 915 to 936 (NASRLPLSRESPEATKPADELV) are disordered. The segment covering 924 to 933 (ESPEATKPAD) has biased composition (basic and acidic residues).

The protein belongs to the PEPCase type 1 family. Homotetramer. The cofactor is Mg(2+).

It is found in the cytoplasm. It carries out the reaction oxaloacetate + phosphate = phosphoenolpyruvate + hydrogencarbonate. Its activity is regulated as follows. By light-reversible phosphorylation. Through the carboxylation of phosphoenolpyruvate (PEP) it forms oxaloacetate, a four-carbon dicarboxylic acid source for the tricarboxylic acid cycle. The polypeptide is Phosphoenolpyruvate carboxylase (Pisum sativum (Garden pea)).